A 483-amino-acid polypeptide reads, in one-letter code: Phloretin 2'-O-glucosyltransferase (483 aa).

Catalysis depends on His-15, which acts as the Proton acceptor. His-15 provides a ligand contact to an anthocyanidin. Asp-118 serves as the catalytic Charge relay. 8 residues coordinate UDP-alpha-D-glucose: Thr-140, Ala-360, Gln-362, His-377, Trp-380, Asn-381, Ser-382, and Glu-385. Ala-400 serves as a coordination point for an anthocyanidin. UDP-alpha-D-glucose contacts are provided by Glu-401 and Gln-402.

Belongs to the UDP-glycosyltransferase family.

It catalyses the reaction phloretin + UDP-alpha-D-glucose = phlorizin + UDP + H(+). Glycosyltransferase that possesses phloretin 2'-O-glycosyltransferase activity. Converts phloretin to phlorizin (phloretin 2'-O-glucoside), a potent antioxidant. Is specific for phloretin and does not possess glycosyltransferase activity toward naringenin, naringenin chalcone, eriodictyol, eriodictyol chalcone, apigenin, luteolin, kaempferol, quercetin, isoliquiritigenin, butein, caffeic acid, 2-coumaric acid, 3-coumaric acid, 3-hydroxybenzoic acid, 3,4-dihydroxybenzoic acid and 3,4-dihydroxyhydrocinnamic acid. Can glycosylate phloretin in the presence of UDP-glucose, UDP-xylose and UDP-galactose. The chain is Phloretin 2'-O-glucosyltransferase from Pyrus communis (Pear).